A 271-amino-acid polypeptide reads, in one-letter code: Proteasome inhibitor PI31 subunit (271 aa).

A2 is subject to N-acetylalanine. The segment at 2-150 (AGLEVLFASA…PIHEQWEKAN (149 aa)) is important for homodimerization and interaction with FBXO7. Residue S153 is modified to Phosphoserine. Residue R205 is modified to Omega-N-methylarginine. Residue R219 is modified to Asymmetric dimethylarginine. Residues 222–271 (IDPSSGLPNRLPPGAVPPGARFDPFGPIGTSPPGPNPDHLPPPGYDDMYL) form a disordered region. R231 bears the Omega-N-methylarginine mark. The span at 251–265 (TSPPGPNPDHLPPPG) shows a compositional bias: pro residues. Position 252 is a phosphoserine (S252).

The protein belongs to the proteasome inhibitor PI31 family. In terms of assembly, monomer and homodimer. Interacts with FBXO7.

The protein localises to the cytoplasm. It is found in the endoplasmic reticulum. Plays an important role in control of proteasome function. Inhibits the hydrolysis of protein and peptide substrates by the 20S proteasome. Also inhibits the activation of the proteasome by the proteasome regulatory proteins PA700 and PA28. The chain is Proteasome inhibitor PI31 subunit (PSMF1) from Pongo abelii (Sumatran orangutan).